A 269-amino-acid polypeptide reads, in one-letter code: Probable aquaporin TIP5-1 (269 aa).

5 consecutive transmembrane segments (helical) span residues 19–39, 54–74, 84–104, 139–159, and 177–197; these read AYFA…GSTI, SLMA…FIAA, AVTF…IFYW, FGAG…VHVA, and ALGA…AGSL. The short motif at 82 to 84 is the NPA 1 element; that stretch reads NPA. An NPA 2 motif is present at residues 203–205; sequence NPA. A helical membrane pass occupies residues 223–243; it reads YWAGPMVGAAVAALVHQALVF.

It belongs to the MIP/aquaporin (TC 1.A.8) family. TIP (TC 1.A.8.10) subfamily. Expressed in leaves and anthers, and at lower levels in roots.

The protein resides in the vacuole membrane. Aquaporins facilitate the transport of water and small neutral solutes across cell membranes. May be involved in transport from the vacuolar compartment to the cytoplasm. In Oryza sativa subsp. japonica (Rice), this protein is Probable aquaporin TIP5-1 (TIP5;1).